We begin with the raw amino-acid sequence, 426 residues long: Serine--tRNA ligase (426 aa).

Position 230 to 232 (230 to 232) interacts with L-serine; the sequence is TAE. ATP is bound at residue 261-263; the sequence is RSE. L-serine is bound at residue glutamate 284. ATP is bound at residue 348–351; that stretch reads EISS. Serine 384 is a binding site for L-serine.

It belongs to the class-II aminoacyl-tRNA synthetase family. Type-1 seryl-tRNA synthetase subfamily. As to quaternary structure, homodimer. The tRNA molecule binds across the dimer.

It localises to the cytoplasm. It catalyses the reaction tRNA(Ser) + L-serine + ATP = L-seryl-tRNA(Ser) + AMP + diphosphate + H(+). It carries out the reaction tRNA(Sec) + L-serine + ATP = L-seryl-tRNA(Sec) + AMP + diphosphate + H(+). It functions in the pathway aminoacyl-tRNA biosynthesis; selenocysteinyl-tRNA(Sec) biosynthesis; L-seryl-tRNA(Sec) from L-serine and tRNA(Sec): step 1/1. In terms of biological role, catalyzes the attachment of serine to tRNA(Ser). Is also able to aminoacylate tRNA(Sec) with serine, to form the misacylated tRNA L-seryl-tRNA(Sec), which will be further converted into selenocysteinyl-tRNA(Sec). This is Serine--tRNA ligase from Novosphingobium aromaticivorans (strain ATCC 700278 / DSM 12444 / CCUG 56034 / CIP 105152 / NBRC 16084 / F199).